Consider the following 171-residue polypeptide: Auxin-responsive protein IAA33 (171 aa).

2 stretches are compositionally biased toward polar residues: residues 1 to 11 and 19 to 32; these read MNSFEPQSQDS and DNST…TTTP. The tract at residues 1–51 is disordered; sequence MNSFEPQSQDSLQRRFHQDNSTTQQPRDTTTPFIPKPASKNHNNSNSSSGA. Over residues 40-49 the composition is skewed to low complexity; the sequence is KNHNNSNSSS. The PB1 domain maps to 72–162; the sequence is VPPVTVVLEG…KRIRILPVKG (91 aa).

The protein belongs to the Aux/IAA family. As to quaternary structure, homodimers and heterodimers.

It is found in the nucleus. Its function is as follows. Aux/IAA proteins are short-lived transcriptional factors that function as repressors of early auxin response genes at low auxin concentrations. Repression is thought to result from the interaction with auxin response factors (ARFs), proteins that bind to the auxin-responsive promoter element (AuxRE). Formation of heterodimers with ARF proteins may alter their ability to modulate early auxin response genes expression. The sequence is that of Auxin-responsive protein IAA33 (IAA33) from Arabidopsis thaliana (Mouse-ear cress).